The following is a 570-amino-acid chain: Peptidyl-prolyl cis-trans isomerase FKBP9 (570 aa).

The first 24 residues, M1–A24, serve as a signal peptide directing secretion. PPIase FKBP-type domains are found at residues G54 to W142, S166 to H254, G278 to H365, and G389 to V477. N-linked (GlcNAc...) asparagine glycans are attached at residues N174, N286, N302, and N397. 2 EF-hand domains span residues W488–T523 and N533–D568. Positions 501, 503, 505, 507, 512, 546, 548, 550, 552, and 557 each coordinate Ca(2+). The Prevents secretion from ER motif lies at H567–L570.

Post-translationally, phosphorylated. As to expression, predominantly expressed in heart, skeletal muscle, lung, liver and kidney. Lower levels found in brain, spleen and testis.

It localises to the endoplasmic reticulum lumen. It carries out the reaction [protein]-peptidylproline (omega=180) = [protein]-peptidylproline (omega=0). Its activity is regulated as follows. Inhibited by FK506. In terms of biological role, PPIases accelerate the folding of proteins during protein synthesis. This Mus musculus (Mouse) protein is Peptidyl-prolyl cis-trans isomerase FKBP9 (Fkbp9).